The primary structure comprises 230 residues: Phosphatidylserine decarboxylase proenzyme (230 aa).

Ser-186 functions as the Schiff-base intermediate with substrate; via pyruvic acid in the catalytic mechanism. At Ser-186 the chain carries Pyruvic acid (Ser); by autocatalysis.

This sequence belongs to the phosphatidylserine decarboxylase family. PSD-A subfamily. As to quaternary structure, heterodimer of a large membrane-associated beta subunit and a small pyruvoyl-containing alpha subunit. It depends on pyruvate as a cofactor. In terms of processing, is synthesized initially as an inactive proenzyme. Formation of the active enzyme involves a self-maturation process in which the active site pyruvoyl group is generated from an internal serine residue via an autocatalytic post-translational modification. Two non-identical subunits are generated from the proenzyme in this reaction, and the pyruvate is formed at the N-terminus of the alpha chain, which is derived from the carboxyl end of the proenzyme. The post-translation cleavage follows an unusual pathway, termed non-hydrolytic serinolysis, in which the side chain hydroxyl group of the serine supplies its oxygen atom to form the C-terminus of the beta chain, while the remainder of the serine residue undergoes an oxidative deamination to produce ammonia and the pyruvoyl prosthetic group on the alpha chain.

It is found in the cell membrane. The enzyme catalyses a 1,2-diacyl-sn-glycero-3-phospho-L-serine + H(+) = a 1,2-diacyl-sn-glycero-3-phosphoethanolamine + CO2. It participates in phospholipid metabolism; phosphatidylethanolamine biosynthesis; phosphatidylethanolamine from CDP-diacylglycerol: step 2/2. Functionally, catalyzes the formation of phosphatidylethanolamine (PtdEtn) from phosphatidylserine (PtdSer). The polypeptide is Phosphatidylserine decarboxylase proenzyme (Wolbachia pipientis wMel).